Here is a 361-residue protein sequence, read N- to C-terminus: MSGNGNAAAIAEEDTPKMRVIRVGTRKSQLARIQTDSVVATLKALYPGLQFEIIAMSTTGDKILDTALSKIGEKSLFTKELEHALERNEVDLVVHSLKDLPTVLPPGFTIGAVCKRESPYDAVVFHPKFVGKTLETLPEKSVVGTSSLRRAAQLQRKFPHLEFKSIRGNLNTRLRKLDELQEFSAIILATAGLQRMGWQNRVGQILHPEECMYAVGQGALGVEVRAKDQDILDLVGVLHDPETLLRCIAERSFLRHLEGGCSVPVAVHTAIKDGQLYLTGGVWSLNGAETMQDTMQTTIHVPVQHEDGPEDDPQLVGITARNIPRQPQLAAENLGISLATLLLNKGAKNILDVARQLNEAH.

At serine 2 the chain carries N-acetylserine. Serine 69 carries the phosphoserine modification. At lysine 74 the chain carries N6-acetyllysine. At serine 147 the chain carries Phosphoserine. At cysteine 261 the chain carries S-(dipyrrolylmethanemethyl)cysteine.

Belongs to the HMBS family. As to quaternary structure, monomer. It depends on dipyrromethane as a cofactor.

It localises to the cytoplasm. It is found in the cytosol. The enzyme catalyses 4 porphobilinogen + H2O = hydroxymethylbilane + 4 NH4(+). It functions in the pathway porphyrin-containing compound metabolism; protoporphyrin-IX biosynthesis; coproporphyrinogen-III from 5-aminolevulinate: step 2/4. As part of the heme biosynthetic pathway, catalyzes the sequential polymerization of four molecules of porphobilinogen to form hydroxymethylbilane, also known as preuroporphyrinogen. Catalysis begins with the assembly of the dipyrromethane cofactor by the apoenzyme from two molecules of porphobilinogen or from preuroporphyrinogen. The covalently linked cofactor acts as a primer, around which the tetrapyrrole product is assembled. In the last step of catalysis, the product, preuroporphyrinogen, is released, leaving the cofactor bound to the holodeaminase intact. The polypeptide is Porphobilinogen deaminase (HMBS) (Bos taurus (Bovine)).